Consider the following 369-residue polypeptide: DNA replication and repair protein RecF (369 aa).

30–37 lines the ATP pocket; the sequence is GINAQGKT.

Belongs to the RecF family.

It is found in the cytoplasm. Functionally, the RecF protein is involved in DNA metabolism; it is required for DNA replication and normal SOS inducibility. RecF binds preferentially to single-stranded, linear DNA. It also seems to bind ATP. The chain is DNA replication and repair protein RecF from Macrococcus caseolyticus (strain JCSC5402) (Macrococcoides caseolyticum).